Consider the following 252-residue polypeptide: Deoxyuridine 5'-triphosphate nucleotidohydrolase, mitochondrial (252 aa).

The N-terminal 69 residues, 1-69 (MTPLCPRPAL…AGRLSQGCRG (69 aa)), are a transit peptide targeting the mitochondrion. Phosphoserine occurs at positions 11, 88, and 99. Residues 78-104 (WKGELPKAGGSPAPGPETPAISPSKRA) are disordered. Residues 173 to 175 (RSG), 187 to 193 (GVIDEDY), Gly198, Arg241, and 246 to 247 (FG) contribute to the dUTP site.

It belongs to the dUTPase family. Homotrimer. The cofactor is Mg(2+). In terms of processing, nuclear isoform 2 is phosphorylated in vivo on Ser-11, a reaction that can be catalyzed in vitro by CDC2. Phosphorylation in mature T-cells occurs in a cell cycle-dependent manner. Isoform 3 is not phosphorylated. Found in a variety of tissues. Isoform 3 expression is constitutive, while isoform 2 expression correlates with the onset of DNA replication (at protein level). Isoform 2 degradation coincides with the cessation of nuclear DNA replication (at protein level).

It localises to the nucleus. Its subcellular location is the mitochondrion. It carries out the reaction dUTP + H2O = dUMP + diphosphate + H(+). It functions in the pathway pyrimidine metabolism; dUMP biosynthesis; dUMP from dCTP (dUTP route): step 2/2. Its activity is regulated as follows. Phosphorylation is necessary for activity. Its function is as follows. Catalyzes the cleavage of 2'-deoxyuridine 5'-triphosphate (dUTP) into 2'-deoxyuridine 5'-monophosphate (dUMP) and inorganic pyrophosphate and through its action efficiently prevents uracil misincorporation into DNA and at the same time provides dUMP, the substrate for de novo thymidylate biosynthesis. Inhibits peroxisome proliferator-activated receptor (PPAR) activity by binding of its N-terminal to PPAR, preventing the latter's dimerization with retinoid X receptor. Essential for embryonic development. This Homo sapiens (Human) protein is Deoxyuridine 5'-triphosphate nucleotidohydrolase, mitochondrial (DUT).